The chain runs to 160 residues: MRPRPPAMRTKRRYILARILPYRARVDQKQMYFAVIEAATSLLGDAAAGLAQPAVVFCEGGYVVVRCRRGTEKDVAVALSTVTAVADERIALRTVATSGTIHALRRRMRSIRQLPGDEEVKIGETYFAVYRYPRQKVDLVEKGIKHQKSLFFTEADLEER.

The protein belongs to the eukaryotic/archaeal RNase P protein component 2 family. As to quaternary structure, consists of a catalytic RNA component and at least 4-5 protein subunits.

The protein resides in the cytoplasm. It carries out the reaction Endonucleolytic cleavage of RNA, removing 5'-extranucleotides from tRNA precursor.. In terms of biological role, part of ribonuclease P, a protein complex that generates mature tRNA molecules by cleaving their 5'-ends. This chain is Ribonuclease P protein component 2, found in Methanoculleus marisnigri (strain ATCC 35101 / DSM 1498 / JR1).